The chain runs to 217 residues: ATP phosphoribosyltransferase (217 aa).

It belongs to the ATP phosphoribosyltransferase family. Short subfamily. As to quaternary structure, heteromultimer composed of HisG and HisZ subunits.

Its subcellular location is the cytoplasm. The catalysed reaction is 1-(5-phospho-beta-D-ribosyl)-ATP + diphosphate = 5-phospho-alpha-D-ribose 1-diphosphate + ATP. Its pathway is amino-acid biosynthesis; L-histidine biosynthesis; L-histidine from 5-phospho-alpha-D-ribose 1-diphosphate: step 1/9. Catalyzes the condensation of ATP and 5-phosphoribose 1-diphosphate to form N'-(5'-phosphoribosyl)-ATP (PR-ATP). Has a crucial role in the pathway because the rate of histidine biosynthesis seems to be controlled primarily by regulation of HisG enzymatic activity. The protein is ATP phosphoribosyltransferase of Burkholderia orbicola (strain AU 1054).